Reading from the N-terminus, the 691-residue chain is MQSSTSTDQHVLHHMDPHRFTSQIPTATSSQLRRRNSTNQGLTDMINKSIARNTISGTGIPTGGINKNKRTRSTVAGGTNGTALALNDKSNSRNSVSRLSINQLGSLQQHLSNRDPRPLRDKNFQSAIQEEIYDYLKKNKFDIETNHPISIKFLKQPTQKGFIIIFKWLYLRLDPGYGFTKSIENEIYQILKNLRYPFLESINKSQISAVGGSNWHKFLGMLHWMVRTNIKLDMCLNKVDRSLINQNTQEITILSQPLKTLDEQDQRQERYELMVEKLLIDYFTESYKSFLKLEDNYEPSMQELKLGFEKFVHIINTDIANLQTQNDNLYEKYQEVMKISQKIKTTREKWKALKSDSNKYENYVNAMKQKSQEWPGKLEKMKSECELKEEEIKALQSNISELHKILRKKGISTEQFELQNQEREKLTRELDKINIQSDKLTSSIKSRKLEAEGIFKSLLDTLRQYDSSIQNLTRSRSQLGHNVNDSSLKINISENLLDRDFHEGISYEQLFPKGSGINESIKKSILKLNDEIQERIKTIEKDNITLEKDIKNLKHDINEKTQINEKLELELSEANSKFELSKQENERLLVAQRIEIEKMEKKINDSNLLMKTKISDAEELVTSTELKLEELKVDLNRKRYKLHQQVIHVIDITSKFKINIQSSLENSENELGNVIEELRNLEFETEHNVTN.

Positions 1–95 (MQSSTSTDQH…LNDKSNSRNS (95 aa)) are disordered. Positions 10–19 (HVLHHMDPHR) are enriched in basic and acidic residues. A compositionally biased stretch (polar residues) spans 20–42 (FTSQIPTATSSQLRRRNSTNQGL). Residue threonine 38 is modified to Phosphothreonine. Residues 54–65 (TISGTGIPTGGI) are compositionally biased toward low complexity. Threonine 248 bears the Phosphothreonine mark. 2 coiled-coil regions span residues 376–446 (GKLE…SIKS) and 522–686 (KKSI…FETE).

It belongs to the NDC80/HEC1 family. In terms of assembly, component of the NDC80 complex, which consists of NDC80, NUF2, SPC24 and SPC25. The NDC80 complex is formed by two subcomplexes, NDC80-NUF2 and SPC24-SPC25, which are joined end-to-end through their coiled-coil domains. It has a rod-like structure with a length of 570 Angstroms and globular domains at either end. The NDC80-NUF2 globular domains are probably directed to microtubules, the SPC24-SPC25 globular domains to the centromere. NDC80 probably interacts with SMC1 and SMC2. Also interacts with KIN3. Interacts with DMC1.

The protein localises to the nucleus. The protein resides in the chromosome. Its subcellular location is the centromere. It is found in the kinetochore. Acts as a component of the essential kinetochore-associated NDC80 complex, which is involved in chromosome segregation and spindle checkpoint activity. This Saccharomyces cerevisiae (strain ATCC 204508 / S288c) (Baker's yeast) protein is Kinetochore protein NDC80.